Here is a 444-residue protein sequence, read N- to C-terminus: MVRRQEEEKKAEKGMRLGKYELGRTLGEGNFGKVKFAKDTVSGHSFAVKIIDKSRIADLNFSLQIKREIRTLKMLKHPHIVRLHEVLASKTKINMVMELVTGGELFDRIVSNGKLTETDGRKMFQQLIDGISYCHSKGVFHRDLKLENVLLDAKGHIKITDFGLSALPQHFRDDGLLHTTCGSPNYVAPEVLANRGYDGAASDIWSCGVILYVILTGCLPFDDRNLAVLYQKICKGDPPIPRWLSPGARTMIKRMLDPNPVTRITVVGIKASEWFKLEYIPSIPDDDDEEEVDTDDDAFSIQELGSEEGKGSDSPTIINAFQLIGMSSFLDLSGFFEQENVSERRIRFTSNSSAKDLLEKIETAVTEMGFSVQKKHAKLRVKQEERNQKGQVGLSVTAEVFEIKPSLNVVELRKSYGDSCLYRQLYERLLKDVGTSSPEQEIVT.

Positions 20 to 275 constitute a Protein kinase domain; sequence YELGRTLGEG…VVGIKASEWF (256 aa). Residues 26-34 and lysine 49 contribute to the ATP site; that span reads LGEGNFGKV. The active-site Proton acceptor is aspartate 143. Residues 161-190 form an activation loop region; that stretch reads DFGLSALPQHFRDDGLLHTTCGSPNYVAPE. The residue at position 165 (serine 165) is a Phosphoserine. Position 179 is a phosphothreonine (threonine 179). Residues 313–337 enclose the NAF domain; that stretch reads DSPTIINAFQLIGMSSFLDLSGFFE. The tract at residues 343–372 is PPI; it reads ERRIRFTSNSSAKDLLEKIETAVTEMGFSV.

Belongs to the protein kinase superfamily. CAMK Ser/Thr protein kinase family. SNF1 subfamily. In terms of assembly, interacts with CBL1. Interacts with CBL2. Interacts with CBL3. Interacts with CBL9. Interacts with ECT1 and ECT2. It depends on Mn(2+) as a cofactor. Autophosphorylated. In terms of tissue distribution, ubiquitous.

The enzyme catalyses L-seryl-[protein] + ATP = O-phospho-L-seryl-[protein] + ADP + H(+). It catalyses the reaction L-threonyl-[protein] + ATP = O-phospho-L-threonyl-[protein] + ADP + H(+). Functionally, CIPK serine-threonine protein kinases interact with CBL proteins. Binding of a CBL protein to the regulatory NAF domain of CIPK protein lead to the activation of the kinase in a calcium-dependent manner. The chain is CBL-interacting serine/threonine-protein kinase 1 (CIPK1) from Arabidopsis thaliana (Mouse-ear cress).